The chain runs to 257 residues: 4-chloro-allylglycine synthase (257 aa).

Fe cation-binding residues include Glu112, His119, Glu173, His203, Glu207, and His210.

Fe(2+) serves as cofactor.

It catalyses the reaction 4-chloro-L-lysine + AH2 + O2 = L-2-amino-4-chloropent-4-enoate + formaldehyde + A + NH4(+) + H2O. Its pathway is amino-acid metabolism. It functions in the pathway antibiotic biosynthesis. Involved in the biosynthesis of terminal alkyne-containing amino acids such as L-propargylglycine (Pra) and L-beta-ethynylserine, that are produced as antibiotics by S.cattleya. Catalyzes an oxidative C-C bond cleavage in 4-chloro-L-lysine to form 4-chloro-allyl-L-glycine (also named L-2-amino-4-chloropent-4-enoate), with release of formaldehyde and ammonia. Is also able to react with L-lysine directly to produce allylglycine in vitro. This is 4-chloro-allylglycine synthase from Streptantibioticus cattleyicolor (strain ATCC 35852 / DSM 46488 / JCM 4925 / NBRC 14057 / NRRL 8057) (Streptomyces cattleya).